The following is a 153-amino-acid chain: Mediator of RNA polymerase II transcription subunit 22 (153 aa).

Belongs to the Mediator complex subunit 22 family. In terms of assembly, component of the Mediator complex.

The protein resides in the nucleus. In terms of biological role, component of the Mediator complex, a coactivator involved in the regulated transcription of nearly all RNA polymerase II-dependent genes. Mediator functions as a bridge to convey information from gene-specific regulatory proteins to the basal RNA polymerase II transcription machinery. Mediator is recruited to promoters by direct interactions with regulatory proteins and serves as a scaffold for the assembly of a functional preinitiation complex with RNA polymerase II and the general transcription factors. This chain is Mediator of RNA polymerase II transcription subunit 22 (mdt-22), found in Caenorhabditis briggsae.